Reading from the N-terminus, the 35-residue chain is Photosystem II reaction center protein T (35 aa).

A helical transmembrane segment spans residues 3–23 (ALVYTFLLVSTLGIIFFAIFF).

It belongs to the PsbT family. PSII is composed of 1 copy each of membrane proteins PsbA, PsbB, PsbC, PsbD, PsbE, PsbF, PsbH, PsbI, PsbJ, PsbK, PsbL, PsbM, PsbT, PsbY, PsbZ, Psb30/Ycf12, at least 3 peripheral proteins of the oxygen-evolving complex and a large number of cofactors. It forms dimeric complexes.

The protein localises to the plastid. The protein resides in the chloroplast thylakoid membrane. Its function is as follows. Found at the monomer-monomer interface of the photosystem II (PS II) dimer, plays a role in assembly and dimerization of PSII. PSII is a light-driven water plastoquinone oxidoreductase, using light energy to abstract electrons from H(2)O, generating a proton gradient subsequently used for ATP formation. The chain is Photosystem II reaction center protein T from Schisandra chinensis (Chinese magnolia vine).